The following is a 508-amino-acid chain: Photosystem II CP47 reaction center protein (508 aa).

Helical transmembrane passes span 21-36 (SVHI…WAGS), 101-115 (IVFS…IWHW), 140-156 (GIHL…FGAF), 203-218 (IAAG…FHLS), 237-252 (VLSS…AFIV), and 457-472 (SFAL…HGAR).

Belongs to the PsbB/PsbC family. PsbB subfamily. PSII is composed of 1 copy each of membrane proteins PsbA, PsbB, PsbC, PsbD, PsbE, PsbF, PsbH, PsbI, PsbJ, PsbK, PsbL, PsbM, PsbT, PsbX, PsbY, PsbZ, Psb30/Ycf12, at least 3 peripheral proteins of the oxygen-evolving complex and a large number of cofactors. It forms dimeric complexes. It depends on Binds multiple chlorophylls. PSII binds additional chlorophylls, carotenoids and specific lipids. as a cofactor.

It localises to the plastid. It is found in the chloroplast thylakoid membrane. Functionally, one of the components of the core complex of photosystem II (PSII). It binds chlorophyll and helps catalyze the primary light-induced photochemical processes of PSII. PSII is a light-driven water:plastoquinone oxidoreductase, using light energy to abstract electrons from H(2)O, generating O(2) and a proton gradient subsequently used for ATP formation. The protein is Photosystem II CP47 reaction center protein of Amborella trichopoda.